The primary structure comprises 103 residues: Small ribosomal subunit protein uS10 (103 aa).

The protein belongs to the universal ribosomal protein uS10 family. In terms of assembly, part of the 30S ribosomal subunit.

Its function is as follows. Involved in the binding of tRNA to the ribosomes. The chain is Small ribosomal subunit protein uS10 from Acinetobacter baumannii (strain AB307-0294).